The sequence spans 276 residues: Lectin-like protein At3g16530 (276 aa).

Residues M1 to A19 form the signal peptide. Residues V20 to E270 form a legume-lectin like region. N79, N129, and N196 each carry an N-linked (GlcNAc...) asparagine glycan.

This sequence belongs to the leguminous lectin family.

It localises to the secreted. The protein localises to the extracellular space. It is found in the apoplast. The sequence is that of Lectin-like protein At3g16530 from Arabidopsis thaliana (Mouse-ear cress).